The chain runs to 84 residues: UPF0248 protein Pisl_1919 (84 aa).

The protein belongs to the UPF0248 family.

The chain is UPF0248 protein Pisl_1919 from Pyrobaculum islandicum (strain DSM 4184 / JCM 9189 / GEO3).